We begin with the raw amino-acid sequence, 507 residues long: Dihydrolipoyllysine-residue acetyltransferase component of pyruvate dehydrogenase complex, mitochondrial (507 aa).

Residues 77 to 153 (HNRVALPALS…PIGKLLCIIV (77 aa)) enclose the Lipoyl-binding domain. Lys118 is modified (N6-lipoyllysine). Disordered regions lie at residues 168 to 223 (DGAS…VSAS) and 248 to 270 (RILA…TQAV). Residues 221–258 (SASPFAKKLAAENGLDLSGVSGSGPGGRILASDLSQAP) form the Peripheral subunit-binding (PSBD) domain. Residues His480 and Asp484 contribute to the active site.

The protein belongs to the 2-oxoacid dehydrogenase family. The cofactor is (R)-lipoate.

It localises to the mitochondrion matrix. It carries out the reaction N(6)-[(R)-dihydrolipoyl]-L-lysyl-[protein] + acetyl-CoA = N(6)-[(R)-S(8)-acetyldihydrolipoyl]-L-lysyl-[protein] + CoA. Its function is as follows. The pyruvate dehydrogenase complex catalyzes the overall conversion of pyruvate to acetyl-CoA and CO(2). It contains multiple copies of three enzymatic components: pyruvate dehydrogenase (E1), dihydrolipoamide acetyltransferase (E2) and lipoamide dehydrogenase (E3). This is Dihydrolipoyllysine-residue acetyltransferase component of pyruvate dehydrogenase complex, mitochondrial from Caenorhabditis elegans.